Reading from the N-terminus, the 423-residue chain is Putative competence-damage inducible protein (423 aa).

This sequence belongs to the CinA family.

The sequence is that of Putative competence-damage inducible protein from Streptococcus pyogenes serotype M12 (strain MGAS2096).